Consider the following 180-residue polypeptide: Large ribosomal subunit protein uL5 (180 aa).

It belongs to the universal ribosomal protein uL5 family. Part of the 50S ribosomal subunit; part of the 5S rRNA/L5/L18/L25 subcomplex. Contacts the 5S rRNA and the P site tRNA. Forms a bridge to the 30S subunit in the 70S ribosome.

In terms of biological role, this is one of the proteins that bind and probably mediate the attachment of the 5S RNA into the large ribosomal subunit, where it forms part of the central protuberance. In the 70S ribosome it contacts protein S13 of the 30S subunit (bridge B1b), connecting the 2 subunits; this bridge is implicated in subunit movement. Contacts the P site tRNA; the 5S rRNA and some of its associated proteins might help stabilize positioning of ribosome-bound tRNAs. This chain is Large ribosomal subunit protein uL5, found in Anaeromyxobacter dehalogenans (strain 2CP-1 / ATCC BAA-258).